The following is a 186-amino-acid chain: Ribosome-recycling factor (186 aa).

The protein belongs to the RRF family.

It is found in the cytoplasm. Responsible for the release of ribosomes from messenger RNA at the termination of protein biosynthesis. May increase the efficiency of translation by recycling ribosomes from one round of translation to another. This chain is Ribosome-recycling factor, found in Chlorobium phaeobacteroides (strain DSM 266 / SMG 266 / 2430).